The following is a 258-amino-acid chain: Ribosome maturation factor RimP (258 aa).

Disordered stretches follow at residues 48–88 (PQRP…PTSA) and 212–258 (IFKK…AEND). Residues 215-224 (KPQKPGKKPG) are compositionally biased toward basic residues.

It belongs to the RimP family.

The protein resides in the cytoplasm. Functionally, required for maturation of 30S ribosomal subunits. This Desulfovibrio desulfuricans (strain ATCC 27774 / DSM 6949 / MB) protein is Ribosome maturation factor RimP.